The chain runs to 374 residues: Mannitol-1-phosphate 5-dehydrogenase (374 aa).

3–14 (AVHFGAGNIGRG) is an NAD(+) binding site.

Belongs to the mannitol dehydrogenase family.

The enzyme catalyses D-mannitol 1-phosphate + NAD(+) = beta-D-fructose 6-phosphate + NADH + H(+). The sequence is that of Mannitol-1-phosphate 5-dehydrogenase from Shouchella clausii (strain KSM-K16) (Alkalihalobacillus clausii).